A 272-amino-acid chain; its full sequence is Biglycan (272 aa).

The signal sequence occupies residues 1–16; the sequence is MWPLWLLASLLALSQA. A propeptide spanning residues 17 to 37 is cleaved from the precursor; the sequence is LPFEQKAFWDFTLDDGLPMLN. 2 O-linked (Xyl...) (glycosaminoglycan) serine glycosylation sites follow: serine 42 and serine 48. The region spanning 55 to 91 is the LRRNT domain; that stretch reads ALPPTFSAMCPFGCHCHLRVVQCSDLGLKAVPKEISP. 2 cysteine pairs are disulfide-bonded: cysteine 64–cysteine 70 and cysteine 68–cysteine 77. LRR repeat units lie at residues 92–113, 116–137, 138–161, 162–183, 186–209, 210–232, 233–254, and 255–272; these read DTTL…DFKG, HLYA…PSAP, DGLK…DLPE, TLNE…DLLR, KLYR…SFLP, TLRE…PDLK, LLQV…DFCP, and VGFG…LFNN.

Belongs to the small leucine-rich proteoglycan (SLRP) family. SLRP class I subfamily. As to quaternary structure, homodimer. Forms a ternary complex with MFAP2 and ELN. The two attached glycosaminoglycan chains can be either chondroitin sulfate or dermatan sulfate. In terms of tissue distribution, found in several connective tissues, especially in articular cartilages.

It is found in the secreted. The protein resides in the extracellular space. Its subcellular location is the extracellular matrix. Functionally, may be involved in collagen fiber assembly. The chain is Biglycan (BGN) from Sus scrofa (Pig).